The sequence spans 352 residues: N-acetyl-gamma-glutamyl-phosphate reductase 1 (352 aa).

Belongs to the NAGSA dehydrogenase family. Type 1 subfamily.

It localises to the cytoplasm. The enzyme catalyses N-acetyl-L-glutamate 5-semialdehyde + phosphate + NADP(+) = N-acetyl-L-glutamyl 5-phosphate + NADPH + H(+). The protein operates within amino-acid biosynthesis; L-arginine biosynthesis; N(2)-acetyl-L-ornithine from L-glutamate: step 3/4. In terms of biological role, catalyzes the NADPH-dependent reduction of N-acetyl-5-glutamyl phosphate to yield N-acetyl-L-glutamate 5-semialdehyde. The sequence is that of N-acetyl-gamma-glutamyl-phosphate reductase 1 from Nostoc sp. (strain PCC 7120 / SAG 25.82 / UTEX 2576).